The chain runs to 114 residues: Phosphorelay protein LuxU (114 aa).

The 96-residue stretch at glycine 19–asparagine 114 folds into the HPt domain. A Phosphohistidine modification is found at histidine 58.

In terms of assembly, monomer.

Its function is as follows. Phosphorelay protein which receives sensory signals from LuxN and LuxP and transmits them to LuxO, at low cell density. LuxN and LuxP transfer a phosphoryl group to LuxU on His-58 and this phosphoryl group is further transferred to LuxO. At high cell density, as LuxU could function to establish an equilibrium between the aspartyl-phosphate of LuxN and the aspartyl-phosphate of LuxO, LuxU transfers phosphate from LuxO to LuxN (and probably LuxP) and finally phosphate is drained from the system. The protein is Phosphorelay protein LuxU (luxU) of Vibrio harveyi (Beneckea harveyi).